The primary structure comprises 508 residues: Photosystem II CP47 reaction center protein (508 aa).

The next 6 membrane-spanning stretches (helical) occupy residues 21–36, 101–115, 140–156, 203–218, 237–252, and 457–472; these read AVHI…WAGS, IVFS…IWHW, GIHL…FGAF, IAAG…FHLS, VLSS…AFVV, and TFAL…HGAR.

Belongs to the PsbB/PsbC family. PsbB subfamily. As to quaternary structure, PSII is composed of 1 copy each of membrane proteins PsbA, PsbB, PsbC, PsbD, PsbE, PsbF, PsbH, PsbI, PsbJ, PsbK, PsbL, PsbM, PsbT, PsbX, PsbY, PsbZ, Psb30/Ycf12, at least 3 peripheral proteins of the oxygen-evolving complex and a large number of cofactors. It forms dimeric complexes. It depends on Binds multiple chlorophylls. PSII binds additional chlorophylls, carotenoids and specific lipids. as a cofactor.

It is found in the plastid. It localises to the chloroplast thylakoid membrane. One of the components of the core complex of photosystem II (PSII). It binds chlorophyll and helps catalyze the primary light-induced photochemical processes of PSII. PSII is a light-driven water:plastoquinone oxidoreductase, using light energy to abstract electrons from H(2)O, generating O(2) and a proton gradient subsequently used for ATP formation. The polypeptide is Photosystem II CP47 reaction center protein (Brachypodium distachyon (Purple false brome)).